A 301-amino-acid chain; its full sequence is tRNA pseudouridine synthase B (301 aa).

Aspartate 45 functions as the Nucleophile in the catalytic mechanism.

It belongs to the pseudouridine synthase TruB family. Type 1 subfamily.

The enzyme catalyses uridine(55) in tRNA = pseudouridine(55) in tRNA. Responsible for synthesis of pseudouridine from uracil-55 in the psi GC loop of transfer RNAs. The protein is tRNA pseudouridine synthase B of Streptomyces coelicolor (strain ATCC BAA-471 / A3(2) / M145).